The primary structure comprises 246 residues: Exosome complex component Rrp41 (246 aa).

This sequence belongs to the RNase PH family. Rrp41 subfamily. As to quaternary structure, component of the archaeal exosome complex. Forms a hexameric ring-like arrangement composed of 3 Rrp41-Rrp42 heterodimers. The hexameric ring associates with a trimer of Rrp4 and/or Csl4 subunits.

The protein resides in the cytoplasm. Its function is as follows. Catalytic component of the exosome, which is a complex involved in RNA degradation. Has 3'-&gt;5' exoribonuclease activity. Can also synthesize heteromeric RNA-tails. This Aeropyrum pernix (strain ATCC 700893 / DSM 11879 / JCM 9820 / NBRC 100138 / K1) protein is Exosome complex component Rrp41.